Consider the following 221-residue polypeptide: 3-phospho-D-glycerate guanylyltransferase (221 aa).

It belongs to the CofC family.

It catalyses the reaction (2R)-3-phosphoglycerate + GTP + H(+) = 3-[(R)-glyceryl]-diphospho-5'-guanosine + diphosphate. The enzyme catalyses (2S)-2-phospholactate + GTP + H(+) = (2S)-lactyl-2-diphospho-5'-guanosine + diphosphate. It participates in cofactor biosynthesis; coenzyme F420 biosynthesis. Functionally, guanylyltransferase that catalyzes the activation of (2R)-3-phosphoglycerate (3PG) as 3-[(R)-glyceryl]-diphospho-5'-guanosine, via the condensation of 3PG with GTP. It is involved in the biosynthesis of a derivative of the hydride carrier cofactor coenzyme F420, 3PG-F420. Can also use (2S)-2-phospholactate (2-PL), with lower turnover, and has weak activity with phosphoenolpyruvate (PEP). In Mycetohabitans rhizoxinica (strain DSM 19002 / CIP 109453 / HKI 454) (Paraburkholderia rhizoxinica), this protein is 3-phospho-D-glycerate guanylyltransferase.